A 254-amino-acid polypeptide reads, in one-letter code: Type II methyl-directed restriction enzyme DpnI (254 aa).

It belongs to the DpnI type II restriction endonuclease family.

It catalyses the reaction Endonucleolytic cleavage of DNA to give specific double-stranded fragments with terminal 5'-phosphates.. An M and P subtype restriction enzyme that recognizes the double-stranded, methylated sequence 5'-G(Me)ATC-3' and cleaves after A-2. The sequence is that of Type II methyl-directed restriction enzyme DpnI from Streptococcus pneumoniae serotype 4 (strain ATCC BAA-334 / TIGR4).